The sequence spans 93 residues: Small ribosomal subunit protein uS19 (93 aa).

It belongs to the universal ribosomal protein uS19 family.

Its function is as follows. Protein S19 forms a complex with S13 that binds strongly to the 16S ribosomal RNA. This chain is Small ribosomal subunit protein uS19, found in Lawsonia intracellularis (strain PHE/MN1-00).